The following is a 971-amino-acid chain: E3 ubiquitin-protein ligase MIB2 (971 aa).

The MIB/HERC2 1 domain maps to 1-80; it reads MDLDPHAGVQ…AHDLLLYDNA (80 aa). A ZZ-type zinc finger spans residues 86–138; that stretch reads HPNIICDCCKKHGLRGMRWKCRVCFDYDLCTQCYMHNKHDLTHAFERYETSHS. 8 residues coordinate Zn(2+): Cys-91, Cys-94, Cys-106, Cys-109, Cys-115, Cys-118, His-124, and His-128. One can recognise an MIB/HERC2 2 domain in the interval 149-227; sequence LPRIPLRGIF…KVDLKCVGEA (79 aa). A Phosphoserine modification is found at Ser-251. 9 ANK repeats span residues 478 to 507, 511 to 540, 544 to 573, 577 to 609, 613 to 642, 647 to 677, 681 to 710, 714 to 742, and 783 to 812; these read QGRT…SVDL, EGNT…GVDA, TRST…DVNL, HADT…DVTA, QGFT…QLVD, DGFT…DVNV, KLQS…NVNT, EGDT…DPGP, and RGRS…ERQA. RING-type zinc fingers lie at residues 848–883 and 927–960; these read CLVC…IRCQ and CPIC…PICR.

As to quaternary structure, interacts with actin monomer. In terms of processing, ubiquitinated. Possibly via autoubiquitination.

The protein resides in the cytoplasm. It localises to the endosome. The catalysed reaction is S-ubiquitinyl-[E2 ubiquitin-conjugating enzyme]-L-cysteine + [acceptor protein]-L-lysine = [E2 ubiquitin-conjugating enzyme]-L-cysteine + N(6)-ubiquitinyl-[acceptor protein]-L-lysine.. It functions in the pathway protein modification; protein ubiquitination. Functionally, E3 ubiquitin-protein ligase that mediates ubiquitination of Delta receptors, which act as ligands of Notch proteins. Positively regulates the Delta-mediated Notch signaling by ubiquitinating the intracellular domain of Delta, leading to endocytosis of Delta receptors. The sequence is that of E3 ubiquitin-protein ligase MIB2 (Mib2) from Rattus norvegicus (Rat).